Consider the following 411-residue polypeptide: Multifunctional CCA protein (411 aa).

Residues glycine 8 and arginine 11 each coordinate ATP. CTP is bound by residues glycine 8 and arginine 11. The Mg(2+) site is built by aspartate 21 and aspartate 23. Residues arginine 91, arginine 137, and arginine 140 each coordinate ATP. Residues arginine 91, arginine 137, and arginine 140 each coordinate CTP. Residues 228 to 333 (SGVHTLLVIE…LKVFNALDIW (106 aa)) enclose the HD domain.

This sequence belongs to the tRNA nucleotidyltransferase/poly(A) polymerase family. Bacterial CCA-adding enzyme type 1 subfamily. Monomer. Can also form homodimers and oligomers. It depends on Mg(2+) as a cofactor. Ni(2+) serves as cofactor.

The catalysed reaction is a tRNA precursor + 2 CTP + ATP = a tRNA with a 3' CCA end + 3 diphosphate. It carries out the reaction a tRNA with a 3' CCA end + 2 CTP + ATP = a tRNA with a 3' CCACCA end + 3 diphosphate. Its function is as follows. Catalyzes the addition and repair of the essential 3'-terminal CCA sequence in tRNAs without using a nucleic acid template. Adds these three nucleotides in the order of C, C, and A to the tRNA nucleotide-73, using CTP and ATP as substrates and producing inorganic pyrophosphate. tRNA 3'-terminal CCA addition is required both for tRNA processing and repair. Also involved in tRNA surveillance by mediating tandem CCA addition to generate a CCACCA at the 3' terminus of unstable tRNAs. While stable tRNAs receive only 3'-terminal CCA, unstable tRNAs are marked with CCACCA and rapidly degraded. The chain is Multifunctional CCA protein from Actinobacillus pleuropneumoniae serotype 5b (strain L20).